Here is an 87-residue protein sequence, read N- to C-terminus: uncharacterized protein (87 aa).

This sequence belongs to the YlmC/YmxH family.

This is an uncharacterized protein from Clostridium acetobutylicum (strain ATCC 824 / DSM 792 / JCM 1419 / IAM 19013 / LMG 5710 / NBRC 13948 / NRRL B-527 / VKM B-1787 / 2291 / W).